The sequence spans 693 residues: Elongation factor G (693 aa).

The tr-type G domain occupies 8–282 (EKTRNIGIMA…AVIDYLPSPL (275 aa)). Residues 17–24 (AHVDAGKT), 81–85 (DTPGH), and 135–138 (NKMD) each bind GTP.

The protein belongs to the TRAFAC class translation factor GTPase superfamily. Classic translation factor GTPase family. EF-G/EF-2 subfamily.

The protein resides in the cytoplasm. Catalyzes the GTP-dependent ribosomal translocation step during translation elongation. During this step, the ribosome changes from the pre-translocational (PRE) to the post-translocational (POST) state as the newly formed A-site-bound peptidyl-tRNA and P-site-bound deacylated tRNA move to the P and E sites, respectively. Catalyzes the coordinated movement of the two tRNA molecules, the mRNA and conformational changes in the ribosome. The chain is Elongation factor G from Streptococcus pneumoniae serotype 2 (strain D39 / NCTC 7466).